A 146-amino-acid chain; its full sequence is MKKVLLVNGPNLNRLGVREVNVYGKGTLATLEADMKQEAEAMGVELECFQSNHEGAIIDRIHEAEDIYEGIILNPGAFTHYSYAIRDAIASISIPVIEVHISNIHQRESFRHESVTAAVCAGQIVGFGFYGYKLALFALMEKLREA.

Tyr23 serves as the catalytic Proton acceptor. Positions 74, 80, and 87 each coordinate substrate. His100 (proton donor) is an active-site residue. Residues 101–102 (IS) and Arg111 contribute to the substrate site.

The protein belongs to the type-II 3-dehydroquinase family. As to quaternary structure, homododecamer.

The catalysed reaction is 3-dehydroquinate = 3-dehydroshikimate + H2O. It participates in metabolic intermediate biosynthesis; chorismate biosynthesis; chorismate from D-erythrose 4-phosphate and phosphoenolpyruvate: step 3/7. Its function is as follows. Catalyzes a trans-dehydration via an enolate intermediate. In Bacillus cereus (strain AH820), this protein is 3-dehydroquinate dehydratase.